A 726-amino-acid polypeptide reads, in one-letter code: MRLLLLLAPLGWLLLAETKGDAKPEDNLLVLTVATKETEGFRRFKRSAQFFNYKIQALGLGEDWPGEAMLAGGGLKVRLLKKALEKHADKENLVILFTDSYDVVFASGPRELLKKFRQARSQVVFSAEELIYPDRRLEAKYPVVSDGKRFLGSGGFIGYAPNLSKLVAEWEGQDSDSDQLFYTKIFLDPEKREQINITLDHRCRIFQNLDGALDEVVLKFEMGQVRARNLAYDTLPVLIHGNGPTKLQLNYLGNYIPRFWTFETGCAVCDEGLRSLKGIGDEALPAVLVGVFIEQPTPFLSLFFQRLLRLHYPQKRLRLFIHNHEQHHKAQVEQFLAEHGDEYQSVKLVGPEVRVANADARNMGADLCRQDRGCTYYFSVDADVALTEPKTLRLLIEQNKNVIAPLMTRHGRLWSNFWGALSADGYYARSEDYVDIVQGRRVGVWNVPYISNIYLIKGSALRAELQETDLFHHSKLDPDMAFCANIRQQDVFMFLTNRHSFGHLLSLDSYQTTHLHNDLWEVFSNPEDWKEKYIHENYTKALAGKMVEMPCPDVYWFPIFTETACDELVEEMEHYGQWSLGDNKDNRIQGGYENVPTIDIHMNQINFEREWHKFLVEYIAPMTEKLYPGYYTRAQFDLAFVVRYKPDEQPSLVPHHDASTFTINIALNRVGVDYEGGGCRFLRYNCSIRAPRKGWTLMHPGRLTHYHEGLPTTKGTRYIAVSFVDP.

Residues 1–18 (MRLLLLLAPLGWLLLAET) form the signal peptide. N-linked (GlcNAc...) asparagine glycans are attached at residues asparagine 196 and asparagine 537. The Fe2OG dioxygenase domain maps to 635–726 (QFDLAFVVRY…RYIAVSFVDP (92 aa)). Residues histidine 655 and aspartate 657 each coordinate Fe cation. The N-linked (GlcNAc...) asparagine glycan is linked to asparagine 685. Residue histidine 707 coordinates Fe cation. Arginine 717 is a catalytic residue.

In terms of assembly, homodimer. Identified in a complex with P3H3 and P3H4. The cofactor is Fe(2+). It depends on L-ascorbate as a cofactor.

It localises to the rough endoplasmic reticulum membrane. The catalysed reaction is L-lysyl-[collagen] + 2-oxoglutarate + O2 = (5R)-5-hydroxy-L-lysyl-[collagen] + succinate + CO2. Part of a complex composed of PLOD1, P3H3 and P3H4 that catalyzes hydroxylation of lysine residues in collagen alpha chains and is required for normal assembly and cross-linkling of collagen fibrils. Forms hydroxylysine residues in -Xaa-Lys-Gly- sequences in collagens. These hydroxylysines serve as sites of attachment for carbohydrate units and are essential for the stability of the intermolecular collagen cross-links. This is Procollagen-lysine,2-oxoglutarate 5-dioxygenase 1 (PLOD1) from Bos taurus (Bovine).